Consider the following 317-residue polypeptide: Beta-ketoacyl-[acyl-carrier-protein] synthase III (317 aa).

Residues Cys-112 and His-244 contribute to the active site. Positions 245 to 249 (QANLR) are ACP-binding. The active site involves Asn-274.

It belongs to the thiolase-like superfamily. FabH family. Homodimer.

It localises to the cytoplasm. It carries out the reaction malonyl-[ACP] + acetyl-CoA + H(+) = 3-oxobutanoyl-[ACP] + CO2 + CoA. It participates in lipid metabolism; fatty acid biosynthesis. Its function is as follows. Catalyzes the condensation reaction of fatty acid synthesis by the addition to an acyl acceptor of two carbons from malonyl-ACP. Catalyzes the first condensation reaction which initiates fatty acid synthesis and may therefore play a role in governing the total rate of fatty acid production. Possesses both acetoacetyl-ACP synthase and acetyl transacylase activities. Its substrate specificity determines the biosynthesis of branched-chain and/or straight-chain of fatty acids. The sequence is that of Beta-ketoacyl-[acyl-carrier-protein] synthase III from Pasteurella multocida (strain Pm70).